The chain runs to 187 residues: Ribonuclease HII (187 aa).

In terms of domain architecture, RNase H type-2 spans 1-187 (MIILGIDEAG…YKPVQVLLNE (187 aa)). A divalent metal cation-binding residues include aspartate 7, glutamate 8, and aspartate 99.

The protein belongs to the RNase HII family. Mn(2+) is required as a cofactor. It depends on Mg(2+) as a cofactor.

It is found in the cytoplasm. The enzyme catalyses Endonucleolytic cleavage to 5'-phosphomonoester.. Functionally, endonuclease that specifically degrades the RNA of RNA-DNA hybrids. The chain is Ribonuclease HII from Francisella tularensis subsp. mediasiatica (strain FSC147).